Reading from the N-terminus, the 466-residue chain is Vimentin (466 aa).

Residues 1–13 are compositionally biased toward low complexity; it reads MSTRSVSSSSYRR. Positions 1 to 31 are disordered; sequence MSTRSVSSSSYRRMFGGPGTASRPSSTRSYV. The residue at position 2 (Ser-2) is an N-acetylserine. A head region spans residues 2–95; it reads STRSVSSSSY…FSLADAINTE (94 aa). Residue Ser-5 is modified to Phosphoserine. Ser-7 carries the phosphoserine; by PKA and PKC; alternate modification. Ser-7 carries O-linked (GlcNAc) serine; alternate glycosylation. Ser-8 bears the Phosphoserine mark. Residues Ser-9 and Ser-10 each carry the phosphoserine; by PKC modification. A Phosphothreonine modification is found at Thr-20. Ser-25 is modified (phosphoserine; by PKA and PKC). The residue at position 26 (Ser-26) is a Phosphoserine; by PKC. O-linked (GlcNAc) threonine glycosylation is present at Thr-33. Ser-34 carries O-linked (GlcNAc) serine; alternate glycosylation. The residue at position 34 (Ser-34) is a Phosphoserine; by PKC; alternate. The residue at position 39 (Ser-39) is a Phosphoserine; by CaMK2, PKA, PKC and ROCK2. A Phosphoserine; by PKC modification is found at Ser-42. Ser-49 is subject to Phosphoserine. At Tyr-53 the chain carries Phosphotyrosine. Position 55 is a phosphoserine (Ser-55). Ser-56 bears the Phosphoserine; by CDK5 and CDK1 mark. Tyr-61 carries the post-translational modification Phosphotyrosine. A Phosphoserine; by PKA and PKC modification is found at Ser-66. Ser-72 carries the phosphoserine; by AURKB and ROCK2 modification. Ser-83 carries the phosphoserine; by CaMK2 modification. Ser-87 is subject to Phosphoserine. Residues 96-131 are coil 1A; the sequence is FKNTRTNEKVELQELNDRFANYIDKVRFLEQQNKIL. Residues 96 to 131 adopt a coiled-coil conformation; sequence FKNTRTNEKVELQELNDRFANYIDKVRFLEQQNKIL. Positions 103-411 constitute an IF rod domain; it reads EKVELQELND…KLLEGEESRI (309 aa). Lys-104 participates in a covalent cross-link: Glycyl lysine isopeptide (Lys-Gly) (interchain with G-Cter in SUMO2). Tyr-117 bears the Phosphotyrosine mark. An N6-acetyllysine; alternate mark is found at Lys-120, Lys-129, and Lys-139. 2 positions are modified to N6-succinyllysine; alternate: Lys-120 and Lys-129. Glycyl lysine isopeptide (Lys-Gly) (interchain with G-Cter in SUMO2); alternate cross-links involve residues Lys-120, Lys-129, and Lys-139. The linker 1 stretch occupies residues 132-153; sequence LAELEQLKGQGKSRLGDLYEEE. Ser-144 is modified (phosphoserine). Residues 154–245 adopt a coiled-coil conformation; that stretch reads MRELRRQVDQ…KLHDEEIQEL (92 aa). Residues 154-245 form a coil 1B region; that stretch reads MRELRRQVDQ…KLHDEEIQEL (92 aa). Lys-168 carries the post-translational modification N6-acetyllysine. The residue at position 188 (Lys-188) is an N6-acetyllysine; alternate. Lys-188 carries the post-translational modification N6-succinyllysine; alternate. Ser-214 carries the phosphoserine modification. An N6-acetyllysine; alternate modification is found at Lys-223. A Glycyl lysine isopeptide (Lys-Gly) (interchain with G-Cter in SUMO2); alternate cross-link involves residue Lys-223. Ser-226 carries the phosphoserine modification. Residue Lys-235 is modified to N6-acetyllysine. The tract at residues 246 to 268 is linker 12; it reads QAQIQEQHVQIDMDVSKPDLTAA. Residue Lys-262 forms a Glycyl lysine isopeptide (Lys-Gly) (interchain with G-Cter in SUMO2) linkage. The interval 269 to 407 is coil 2; the sequence is LRDVRQQYES…ATYRKLLEGE (139 aa). N6-acetyllysine; alternate is present on Lys-294. The residue at position 294 (Lys-294) is an N6-succinyllysine; alternate. Residue Lys-294 forms a Glycyl lysine isopeptide (Lys-Gly) (interchain with G-Cter in SUMO2); alternate linkage. Ser-299 carries the phosphoserine modification. Residues 303-407 adopt a coiled-coil conformation; the sequence is NRNNDALRQA…ATYRKLLEGE (105 aa). A Glycyl lysine isopeptide (Lys-Gly) (interchain with G-Cter in SUMO2) cross-link involves residue Lys-313. The [IL]-x-C-x-x-[DE] motif motif lies at 326–329; sequence LTCE. N6-acetyllysine; alternate is present on Lys-373. Lys-373 participates in a covalent cross-link: Glycyl lysine isopeptide (Lys-Gly) (interchain with G-Cter in SUMO2); alternate. The segment at 408-466 is tail; sequence ESRISLPLPNFSSLNLRETNLDSLPLVDTHSKRTLLIKTVETRDGQVINETSQHHDDLE. Ser-409, Ser-412, Ser-419, and Ser-420 each carry phosphoserine. The residue at position 426 (Thr-426) is a Phosphothreonine. Phosphoserine is present on Ser-430. Thr-436 is modified (phosphothreonine). Ser-438 carries the phosphoserine modification. A Glycyl lysine isopeptide (Lys-Gly) (interchain with G-Cter in SUMO2) cross-link involves residue Lys-439. Lys-445 is modified (N6-acetyllysine; alternate). The residue at position 445 (Lys-445) is an N6-succinyllysine; alternate. Lys-445 participates in a covalent cross-link: Glycyl lysine isopeptide (Lys-Gly) (interchain with G-Cter in SUMO2); alternate. A Glycyl lysine isopeptide (Lys-Gly) (interchain with G-Cter in SUMO1); alternate cross-link involves residue Lys-445. Thr-446 and Thr-458 each carry phosphothreonine. A Phosphoserine modification is found at Ser-459.

The protein belongs to the intermediate filament family. Homomer assembled from elementary dimers. Identified in complexes that contain VIM, EZR, AHNAK, BFSP1, BFSP2, ANK2, PLEC, PRX and spectrin. Interacts with BCAS3. Interacts with LGSN. Interacts with SYNM. Interacts (via rod region) with PLEC (via CH 1 domain). Interacts with STK33. Interacts with LARP6. Interacts with RAB8B. Interacts with TOR1A; the interaction associates TOR1A with the cytoskeleton. Interacts with TOR1AIP1. Interacts with TOR1AIP1. Interacts with DIAPH1. Interacts with EPPK1; interaction is dependent of higher-order structure of intermediate filament. Interacts with the non-receptor tyrosine kinase SRMS; the interaction leads to phosphorylation of VIM. Interacts with NOD2. Interacts (via head region) with CORO1C. Interacts with HDGF. Interacts with PRKCE (via phorbol-ester/DAG-type 2 domain). Interacts with BFSP2. Interacts with PPL. Interacts with PKP1 and PKP2. Interacts with SCRIB (via PDZ domains); the interaction protects SCRIB from proteasomal degradation and facilitates SCRIB localization to intermediate filaments, the interaction is reduced by cell contact inhibition. One of the most prominent phosphoproteins in various cells of mesenchymal origin. Phosphorylation is enhanced during cell division, at which time vimentin filaments are significantly reorganized. Phosphorylation by PKN1 inhibits the formation of filaments. Filament disassembly during mitosis is promoted by phosphorylation at Ser-55 as well as by nestin. Phosphorylated at Ser-56 by CDK5 during neutrophil secretion in the cytoplasm. Phosphorylated by STK33. Phosphorylated on tyrosine residues by SRMS. In terms of processing, S-nitrosylation is induced by interferon-gamma and oxidatively-modified low-densitity lipoprotein (LDL(ox)) possibly implicating the iNOS-S100A8/9 transnitrosylase complex.

The protein resides in the cytoplasm. It is found in the cytoskeleton. Its subcellular location is the nucleus matrix. The protein localises to the cell membrane. Functionally, vimentins are class-III intermediate filaments found in various non-epithelial cells, especially mesenchymal cells. Vimentin is attached to the nucleus, endoplasmic reticulum, and mitochondria, either laterally or terminally. Plays a role in cell directional movement, orientation, cell sheet organization and Golgi complex polarization at the cell migration front. Protects SCRIB from proteasomal degradation and facilitates its localization to intermediate filaments in a cell contact-mediated manner. Its function is as follows. Involved with LARP6 in the stabilization of type I collagen mRNAs for CO1A1 and CO1A2. This chain is Vimentin (VIM), found in Bos taurus (Bovine).